The primary structure comprises 315 residues: Ester hydrolase C11orf54 homolog (315 aa).

Zn(2+) contacts are provided by histidine 266, histidine 268, and histidine 278.

Monomer.

It is found in the nucleus. Exhibits ester hydrolase activity on the substrate p-nitrophenyl acetate. The protein is Ester hydrolase C11orf54 homolog of Bos taurus (Bovine).